Reading from the N-terminus, the 174-residue chain is Urease accessory protein UreE (174 aa).

The disordered stretch occupies residues 146–174 (NGAYATGGHAHDHDGEPEHVHGPGCQHAH). The span at 154-166 (HAHDHDGEPEHVH) shows a compositional bias: basic and acidic residues.

Belongs to the UreE family.

It is found in the cytoplasm. Its function is as follows. Involved in urease metallocenter assembly. Binds nickel. Probably functions as a nickel donor during metallocenter assembly. The chain is Urease accessory protein UreE from Albidiferax ferrireducens (strain ATCC BAA-621 / DSM 15236 / T118) (Rhodoferax ferrireducens).